The primary structure comprises 306 residues: 4-hydroxy-3-methylbut-2-enyl diphosphate reductase 1 (306 aa).

Cys10 contributes to the [4Fe-4S] cluster binding site. His39 and His72 together coordinate (2E)-4-hydroxy-3-methylbut-2-enyl diphosphate. 2 residues coordinate dimethylallyl diphosphate: His39 and His72. His39 and His72 together coordinate isopentenyl diphosphate. Cys94 is a [4Fe-4S] cluster binding site. Residue His122 participates in (2E)-4-hydroxy-3-methylbut-2-enyl diphosphate binding. Residue His122 participates in dimethylallyl diphosphate binding. His122 lines the isopentenyl diphosphate pocket. The active-site Proton donor is Glu124. A (2E)-4-hydroxy-3-methylbut-2-enyl diphosphate-binding site is contributed by Thr162. Cys192 provides a ligand contact to [4Fe-4S] cluster. (2E)-4-hydroxy-3-methylbut-2-enyl diphosphate contacts are provided by Ser220, Ser221, Asn222, and Ser264. Ser220, Ser221, Asn222, and Ser264 together coordinate dimethylallyl diphosphate. Residues Ser220, Ser221, Asn222, and Ser264 each contribute to the isopentenyl diphosphate site.

This sequence belongs to the IspH family. The cofactor is [4Fe-4S] cluster.

The enzyme catalyses isopentenyl diphosphate + 2 oxidized [2Fe-2S]-[ferredoxin] + H2O = (2E)-4-hydroxy-3-methylbut-2-enyl diphosphate + 2 reduced [2Fe-2S]-[ferredoxin] + 2 H(+). It catalyses the reaction dimethylallyl diphosphate + 2 oxidized [2Fe-2S]-[ferredoxin] + H2O = (2E)-4-hydroxy-3-methylbut-2-enyl diphosphate + 2 reduced [2Fe-2S]-[ferredoxin] + 2 H(+). It participates in isoprenoid biosynthesis; dimethylallyl diphosphate biosynthesis; dimethylallyl diphosphate from (2E)-4-hydroxy-3-methylbutenyl diphosphate: step 1/1. It functions in the pathway isoprenoid biosynthesis; isopentenyl diphosphate biosynthesis via DXP pathway; isopentenyl diphosphate from 1-deoxy-D-xylulose 5-phosphate: step 6/6. In terms of biological role, catalyzes the conversion of 1-hydroxy-2-methyl-2-(E)-butenyl 4-diphosphate (HMBPP) into a mixture of isopentenyl diphosphate (IPP) and dimethylallyl diphosphate (DMAPP). Acts in the terminal step of the DOXP/MEP pathway for isoprenoid precursor biosynthesis. This Rhodopseudomonas palustris (strain ATCC BAA-98 / CGA009) protein is 4-hydroxy-3-methylbut-2-enyl diphosphate reductase 1.